Consider the following 157-residue polypeptide: Large ribosomal subunit protein uL22 (157 aa).

The protein belongs to the universal ribosomal protein uL22 family. Part of the 50S ribosomal subunit.

In terms of biological role, this protein binds specifically to 23S rRNA. It makes multiple contacts with different domains of the 23S rRNA in the assembled 50S subunit and ribosome. Its function is as follows. The globular domain of the protein is located near the polypeptide exit tunnel on the outside of the subunit, while an extended beta-hairpin is found that lines the wall of the exit tunnel in the center of the 70S ribosome. The chain is Large ribosomal subunit protein uL22 from Methanocorpusculum labreanum (strain ATCC 43576 / DSM 4855 / Z).